The chain runs to 448 residues: C4-dicarboxylate transport protein (448 aa).

The next 9 helical transmembrane spans lie at 9–29, 59–79, 91–111, 159–179, 203–223, 237–257, 312–332, 345–365, and 367–387; these read SLYF…HFYP, LIKM…IAGM, VALL…LLVI, AFAN…GFAL, IVNM…AFTI, LIIC…GTIS, GYSF…IFIA, ITLL…TGSG, and IVMA…LALI.

Belongs to the dicarboxylate/amino acid:cation symporter (DAACS) (TC 2.A.23) family.

The protein resides in the cell inner membrane. Its function is as follows. Responsible for the transport of dicarboxylates such as succinate, fumarate, and malate from the periplasm across the membrane. The chain is C4-dicarboxylate transport protein from Acinetobacter baylyi (strain ATCC 33305 / BD413 / ADP1).